Reading from the N-terminus, the 327-residue chain is Tetraacyldisaccharide 4'-kinase (327 aa).

56 to 63 (FVGGTGKT) serves as a coordination point for ATP.

It belongs to the LpxK family.

The catalysed reaction is a lipid A disaccharide + ATP = a lipid IVA + ADP + H(+). Its pathway is glycolipid biosynthesis; lipid IV(A) biosynthesis; lipid IV(A) from (3R)-3-hydroxytetradecanoyl-[acyl-carrier-protein] and UDP-N-acetyl-alpha-D-glucosamine: step 6/6. Its function is as follows. Transfers the gamma-phosphate of ATP to the 4'-position of a tetraacyldisaccharide 1-phosphate intermediate (termed DS-1-P) to form tetraacyldisaccharide 1,4'-bis-phosphate (lipid IVA). This Halorhodospira halophila (strain DSM 244 / SL1) (Ectothiorhodospira halophila (strain DSM 244 / SL1)) protein is Tetraacyldisaccharide 4'-kinase.